The following is a 597-amino-acid chain: Arginine--tRNA ligase (597 aa).

The short motif at 138–148 is the 'HIGH' region element; the sequence is ANPTGPMHVGH.

Belongs to the class-I aminoacyl-tRNA synthetase family. In terms of assembly, monomer.

Its subcellular location is the cytoplasm. The catalysed reaction is tRNA(Arg) + L-arginine + ATP = L-arginyl-tRNA(Arg) + AMP + diphosphate. This is Arginine--tRNA ligase from Nitrobacter winogradskyi (strain ATCC 25391 / DSM 10237 / CIP 104748 / NCIMB 11846 / Nb-255).